The following is a 510-amino-acid chain: ATP synthase subunit alpha (510 aa).

169-176 serves as a coordination point for ATP; sequence GDRQTGKT.

The protein belongs to the ATPase alpha/beta chains family. As to quaternary structure, F-type ATPases have 2 components, CF(1) - the catalytic core - and CF(0) - the membrane proton channel. CF(1) has five subunits: alpha(3), beta(3), gamma(1), delta(1), epsilon(1). CF(0) has four main subunits: a(1), b(1), b'(1) and c(9-12).

The protein resides in the cell inner membrane. The catalysed reaction is ATP + H2O + 4 H(+)(in) = ADP + phosphate + 5 H(+)(out). Its function is as follows. Produces ATP from ADP in the presence of a proton gradient across the membrane. The alpha chain is a regulatory subunit. The polypeptide is ATP synthase subunit alpha (Rhodopseudomonas palustris (strain BisB5)).